Consider the following 311-residue polypeptide: Methionyl-tRNA formyltransferase (311 aa).

110–113 (SLLP) contributes to the (6S)-5,6,7,8-tetrahydrofolate binding site.

The protein belongs to the Fmt family.

The enzyme catalyses L-methionyl-tRNA(fMet) + (6R)-10-formyltetrahydrofolate = N-formyl-L-methionyl-tRNA(fMet) + (6S)-5,6,7,8-tetrahydrofolate + H(+). Attaches a formyl group to the free amino group of methionyl-tRNA(fMet). The formyl group appears to play a dual role in the initiator identity of N-formylmethionyl-tRNA by promoting its recognition by IF2 and preventing the misappropriation of this tRNA by the elongation apparatus. The chain is Methionyl-tRNA formyltransferase from Streptococcus pyogenes serotype M18 (strain MGAS8232).